The sequence spans 111 residues: Large ribosomal subunit protein uL24 (111 aa).

A disordered region spans residues 43–62 (TRHKKKDQTTKRAAKQSTGK).

The protein belongs to the universal ribosomal protein uL24 family. Part of the 50S ribosomal subunit.

One of two assembly initiator proteins, it binds directly to the 5'-end of the 23S rRNA, where it nucleates assembly of the 50S subunit. Its function is as follows. One of the proteins that surrounds the polypeptide exit tunnel on the outside of the subunit. The chain is Large ribosomal subunit protein uL24 from Mycoplasma pneumoniae (strain ATCC 29342 / M129 / Subtype 1) (Mycoplasmoides pneumoniae).